The chain runs to 131 residues: UPF0134 protein MPN_010 (131 aa).

This sequence belongs to the UPF0134 family.

The protein is UPF0134 protein MPN_010 of Mycoplasma pneumoniae (strain ATCC 29342 / M129 / Subtype 1) (Mycoplasmoides pneumoniae).